A 357-amino-acid polypeptide reads, in one-letter code: tRNA N6-adenosine threonylcarbamoyltransferase (357 aa).

The Fe cation site is built by H116 and H120. Substrate-binding positions include 139-143, D172, G185, and N284; that span reads LVSGG. D312 is a binding site for Fe cation.

It belongs to the KAE1 / TsaD family. The cofactor is Fe(2+).

It is found in the cytoplasm. The catalysed reaction is L-threonylcarbamoyladenylate + adenosine(37) in tRNA = N(6)-L-threonylcarbamoyladenosine(37) in tRNA + AMP + H(+). Functionally, required for the formation of a threonylcarbamoyl group on adenosine at position 37 (t(6)A37) in tRNAs that read codons beginning with adenine. Is involved in the transfer of the threonylcarbamoyl moiety of threonylcarbamoyl-AMP (TC-AMP) to the N6 group of A37, together with TsaE and TsaB. TsaD likely plays a direct catalytic role in this reaction. The polypeptide is tRNA N6-adenosine threonylcarbamoyltransferase (Synechococcus sp. (strain CC9902)).